The chain runs to 245 residues: 1-(5-phosphoribosyl)-5-[(5-phosphoribosylamino)methylideneamino] imidazole-4-carboxamide isomerase (245 aa).

Residue D7 is the Proton acceptor of the active site. Residue D129 is the Proton donor of the active site.

Belongs to the HisA/HisF family.

It localises to the cytoplasm. The catalysed reaction is 1-(5-phospho-beta-D-ribosyl)-5-[(5-phospho-beta-D-ribosylamino)methylideneamino]imidazole-4-carboxamide = 5-[(5-phospho-1-deoxy-D-ribulos-1-ylimino)methylamino]-1-(5-phospho-beta-D-ribosyl)imidazole-4-carboxamide. It functions in the pathway amino-acid biosynthesis; L-histidine biosynthesis; L-histidine from 5-phospho-alpha-D-ribose 1-diphosphate: step 4/9. This Buchnera aphidicola subsp. Cinara cedri (strain Cc) protein is 1-(5-phosphoribosyl)-5-[(5-phosphoribosylamino)methylideneamino] imidazole-4-carboxamide isomerase.